The chain runs to 158 residues: Putative 4-hydroxy-4-methyl-2-oxoglutarate aldolase (158 aa).

Substrate is bound by residues 75–78 and arginine 97; that span reads GDLI. A divalent metal cation is bound at residue aspartate 98.

It belongs to the class II aldolase/RraA-like family. In terms of assembly, homotrimer. A divalent metal cation is required as a cofactor.

It carries out the reaction 4-hydroxy-4-methyl-2-oxoglutarate = 2 pyruvate. It catalyses the reaction oxaloacetate + H(+) = pyruvate + CO2. Functionally, catalyzes the aldol cleavage of 4-hydroxy-4-methyl-2-oxoglutarate (HMG) into 2 molecules of pyruvate. Also contains a secondary oxaloacetate (OAA) decarboxylase activity due to the common pyruvate enolate transition state formed following C-C bond cleavage in the retro-aldol and decarboxylation reactions. This chain is Putative 4-hydroxy-4-methyl-2-oxoglutarate aldolase, found in Saccharopolyspora erythraea (strain ATCC 11635 / DSM 40517 / JCM 4748 / NBRC 13426 / NCIMB 8594 / NRRL 2338).